We begin with the raw amino-acid sequence, 338 residues long: Thiamine thiazole synthase (338 aa).

Residues 1–43 (MSPVATESMYKPTTINQTAHQQAMDPLKSKQQSNATVNKPAFK) form a disordered region. A compositionally biased stretch (polar residues) spans 11–21 (KPTTINQTAHQ). Substrate is bound by residues Ala91, 112–113 (ES), Gly120, and Cys185. A 2,3-didehydroalanine (Cys) modification is found at Cys221. Substrate is bound by residues Asp223, His238, Met290, and 300 to 302 (RMG).

Belongs to the THI4 family. Homooctamer. Fe cation serves as cofactor. Post-translationally, during the catalytic reaction, a sulfide is transferred from Cys-221 to a reaction intermediate, generating a dehydroalanine residue. As to expression, highly expressed in haustoria, and only in low amounts in intercellular hyphae. Found in the basal hyphae of the uredia, but not in the pedicels and only at very low levels in uredospores.

It is found in the cytoplasm. The protein localises to the nucleus. It catalyses the reaction [ADP-thiazole synthase]-L-cysteine + glycine + NAD(+) = [ADP-thiazole synthase]-dehydroalanine + ADP-5-ethyl-4-methylthiazole-2-carboxylate + nicotinamide + 3 H2O + 2 H(+). Its function is as follows. Involved in biosynthesis of the thiamine precursor thiazole. Catalyzes the conversion of NAD and glycine to adenosine diphosphate 5-(2-hydroxyethyl)-4-methylthiazole-2-carboxylic acid (ADT), an adenylated thiazole intermediate. The reaction includes an iron-dependent sulfide transfer from a conserved cysteine residue of the protein to a thiazole intermediate. The enzyme can only undergo a single turnover, which suggests it is a suicide enzyme. May have additional roles in adaptation to various stress conditions and in DNA damage tolerance. The protein is Thiamine thiazole synthase (THI2) of Uromyces fabae (Rust fungus).